The following is a 390-amino-acid chain: Imidazolonepropionase (390 aa).

2 residues coordinate Fe(3+): H71 and H73. 2 residues coordinate Zn(2+): H71 and H73. 4-imidazolone-5-propanoate-binding residues include R80, Y138, and H165. N-formimidoyl-L-glutamate is bound at residue Y138. H228 contributes to the Fe(3+) binding site. Zn(2+) is bound at residue H228. A 4-imidazolone-5-propanoate-binding site is contributed by Q231. D302 contributes to the Fe(3+) binding site. Zn(2+) is bound at residue D302. 2 residues coordinate N-formimidoyl-L-glutamate: N304 and G306. A 4-imidazolone-5-propanoate-binding site is contributed by S307.

The protein belongs to the metallo-dependent hydrolases superfamily. HutI family. Requires Zn(2+) as cofactor. Fe(3+) is required as a cofactor.

Its subcellular location is the cytoplasm. It carries out the reaction 4-imidazolone-5-propanoate + H2O = N-formimidoyl-L-glutamate. It functions in the pathway amino-acid degradation; L-histidine degradation into L-glutamate; N-formimidoyl-L-glutamate from L-histidine: step 3/3. Its function is as follows. Catalyzes the hydrolytic cleavage of the carbon-nitrogen bond in imidazolone-5-propanoate to yield N-formimidoyl-L-glutamate. It is the third step in the universal histidine degradation pathway. This Streptomyces griseus subsp. griseus (strain JCM 4626 / CBS 651.72 / NBRC 13350 / KCC S-0626 / ISP 5235) protein is Imidazolonepropionase.